The primary structure comprises 434 residues: MNITFIGSGYVGLVSGIIMGYLGHNVTCFDNDDVKISKLNKKILPIYEAKLDEYLKQALESDRLKFTNIYSNDFRNVDAVFITVGTPSKELGEADLKYVYDAVDKVSKHINKDCLIVIKSTVPPGSCNNIIAYLKAKGFSFNVASNPEFLREGSAVEDFLYPDRIVVGVNNQESEALLRTIYAPLIEQGVKFLVTNLVTSELIKYASNSFLATKIAFINEMADLCEKIGANIKDLSQGVGLDQRIGRNFLNAGPGFGGSCFPKDILALNNLVENYKIDCKILKSVIKSNKLRPGNMVAKIATLLDGDLKGRNIAILGLTYKAGTDDVRASPAIEIITILLNKDVYVKAFDPIGLENAKKNLEHKNLLYFASAVEACESVDIIVIATEWSEFKELNWQEIYDLVKSPMIIDLRNILDNEVMKKIGFRYYAVGSKI.

Residues 2 to 19, Val11, Asp30, Lys35, Thr121, and Glu152 contribute to the NAD(+) site; that span reads NITFIGSGYVGLVSGIIM. Residues 148 to 152, Lys204, Asn208, 249 to 253, and Gly257 contribute to the substrate site; these read EFLRE and FLNAG. Catalysis depends on Cys260, which acts as the Nucleophile. Residue Lys263 coordinates NAD(+). A substrate-binding site is contributed by Lys321. NAD(+) is bound at residue Arg328.

It belongs to the UDP-glucose/GDP-mannose dehydrogenase family.

It carries out the reaction UDP-alpha-D-glucose + 2 NAD(+) + H2O = UDP-alpha-D-glucuronate + 2 NADH + 3 H(+). It participates in nucleotide-sugar biosynthesis; UDP-alpha-D-glucuronate biosynthesis; UDP-alpha-D-glucuronate from UDP-alpha-D-glucose: step 1/1. This Rickettsia typhi (strain ATCC VR-144 / Wilmington) protein is UDP-glucose 6-dehydrogenase (udg).